The following is a 193-amino-acid chain: Bifunctional protein PyrR (193 aa).

Substrate is bound by residues 57 to 58 (TR), arginine 98, 119 to 127 (DDVLYSGRS), arginine 152, and valine 176. The PRPP-binding motif lies at 115–127 (VILVDDVLYSGRS).

The protein belongs to the purine/pyrimidine phosphoribosyltransferase family. PyrR subfamily.

The catalysed reaction is UMP + diphosphate = 5-phospho-alpha-D-ribose 1-diphosphate + uracil. In terms of biological role, regulates the transcription of the pyrimidine nucleotide (pyr) operon in response to exogenous pyrimidines. Its function is as follows. Also displays a weak uracil phosphoribosyltransferase activity which is not physiologically significant. This Mycobacterium bovis (strain ATCC BAA-935 / AF2122/97) protein is Bifunctional protein PyrR.